The primary structure comprises 181 residues: Early E3 20.3 kDa glycoprotein (181 aa).

N-linked (GlcNAc...) asparagine; by host glycans are attached at residues N29, N57, N70, and N75.

The protein belongs to the adenoviridae E3_20 family.

E3 proteins seem to be dispensable for virus growth in tissue culture cells. They are potentially important for virus growth under special conditions; E3 region may help adenoviruses to evade the immune surveillance of the host. The sequence is that of Early E3 20.3 kDa glycoprotein from Homo sapiens (Human).